The sequence spans 217 residues: tRNA (guanine-N(7)-)-methyltransferase (217 aa).

Positions 56, 81, 108, and 130 each coordinate S-adenosyl-L-methionine. The active site involves Asp-130. Substrate contacts are provided by Lys-134 and Asp-166.

It belongs to the class I-like SAM-binding methyltransferase superfamily. TrmB family.

It carries out the reaction guanosine(46) in tRNA + S-adenosyl-L-methionine = N(7)-methylguanosine(46) in tRNA + S-adenosyl-L-homocysteine. It functions in the pathway tRNA modification; N(7)-methylguanine-tRNA biosynthesis. Its function is as follows. Catalyzes the formation of N(7)-methylguanine at position 46 (m7G46) in tRNA. The chain is tRNA (guanine-N(7)-)-methyltransferase from Neorickettsia sennetsu (strain ATCC VR-367 / Miyayama) (Ehrlichia sennetsu).